A 590-amino-acid chain; its full sequence is Aspartate--tRNA(Asp/Asn) ligase (590 aa).

Glu175 is a binding site for L-aspartate. Residues Gln199–Lys202 are aspartate. Positions 221 and 450 each coordinate L-aspartate. Arg221–Glu223 is an ATP binding site. ATP is bound at residue Glu484. Arg491 is a binding site for L-aspartate. Gly536–Arg539 is an ATP binding site.

The protein belongs to the class-II aminoacyl-tRNA synthetase family. Type 1 subfamily. Homodimer.

It localises to the cytoplasm. It carries out the reaction tRNA(Asx) + L-aspartate + ATP = L-aspartyl-tRNA(Asx) + AMP + diphosphate. Aspartyl-tRNA synthetase with relaxed tRNA specificity since it is able to aspartylate not only its cognate tRNA(Asp) but also tRNA(Asn). Reaction proceeds in two steps: L-aspartate is first activated by ATP to form Asp-AMP and then transferred to the acceptor end of tRNA(Asp/Asn). In Azorhizobium caulinodans (strain ATCC 43989 / DSM 5975 / JCM 20966 / LMG 6465 / NBRC 14845 / NCIMB 13405 / ORS 571), this protein is Aspartate--tRNA(Asp/Asn) ligase.